The following is a 334-amino-acid chain: Protein-methionine-sulfoxide reductase catalytic subunit MsrP (334 aa).

Residues 1 to 44 constitute a signal peptide (tat-type signal); it reads MKKNQFLKESDVTAESVFFMKRRQVLKALGISAAALSLPHAAHA. Residues Asn88, 91–92, Cys146, Thr181, Asn233, Arg238, and 249–251 each bind Mo-molybdopterin; these read YE and GIK.

This sequence belongs to the MsrP family. As to quaternary structure, heterodimer of a catalytic subunit (MsrP) and a heme-binding subunit (MsrQ). It depends on Mo-molybdopterin as a cofactor. Post-translationally, predicted to be exported by the Tat system. The position of the signal peptide cleavage has not been experimentally proven.

Its subcellular location is the periplasm. The enzyme catalyses L-methionyl-[protein] + a quinone + H2O = L-methionyl-(S)-S-oxide-[protein] + a quinol. The catalysed reaction is L-methionyl-[protein] + a quinone + H2O = L-methionyl-(R)-S-oxide-[protein] + a quinol. Functionally, part of the MsrPQ system that repairs oxidized periplasmic proteins containing methionine sulfoxide residues (Met-O), using respiratory chain electrons. Thus protects these proteins from oxidative-stress damage caused by reactive species of oxygen and chlorine generated by the host defense mechanisms. MsrPQ is essential for the maintenance of envelope integrity under bleach stress, rescuing a wide series of structurally unrelated periplasmic proteins from methionine oxidation, including the primary periplasmic chaperone SurA and the lipoprotein Pal. The catalytic subunit MsrP is non-stereospecific, being able to reduce both (R-) and (S-) diastereoisomers of methionine sulfoxide. This Escherichia coli O127:H6 (strain E2348/69 / EPEC) protein is Protein-methionine-sulfoxide reductase catalytic subunit MsrP.